Here is a 523-residue protein sequence, read N- to C-terminus: MFSRVAKTSFSAVRAAKSQFSHSLSQQTSKTWVPAATCSKRSYAAEAKTSAAPVSGQIVAVIGAVVDVQFEDDLPPILNALEVQGRTSRLVLEVAQHLGENTVRTIAMDGTEGLIRGQKCVDTGSPISIPVGPETLGRIINVIGEPIDERGPIGTDRRSAIHAEAPEFVEMSVNQEILVTGIKVVDLLAPYAKGGKIGLFGGAGVGKTVLIMELINNVAKAHGGYSVFAGVGERTREGNDLYHEMIEGGVISLKDDTSKVALVYGQMNEPPGARARVALTGLTVAEYFRDQEGQDVLLFIDNIFRFTQAGSEVSALLGRIPSAVGYQPTLATDMGTMQERITTTKKGSITSVQAIYVPADDLTDPAPATTFAHLDATTVLSRGIAELGIYPAVDPLDSSSRIMDPNVVGERHYSIARGVQKILQDNKTLQDIIAILGMDELSEDDKLTVSRARKIQRFLSQPFQVAEVFTGSPGKLVSMAETIDGFESIIKGECDHLPEIAFYMVGNIQDVKDKADRLAEELS.

Residues 1–19 (MFSRVAKTSFSAVRAAKSQ) constitute a mitochondrion transit peptide. 201 to 208 (GGAGVGKT) serves as a coordination point for ATP.

Belongs to the ATPase alpha/beta chains family. In terms of assembly, F-type ATPases have 2 components, CF(1) - the catalytic core - and CF(0) - the membrane proton channel. CF(1) has five subunits: alpha(3), beta(3), gamma(1), delta(1), epsilon(1). CF(0) has three main subunits: a, b and c.

The protein localises to the mitochondrion. It localises to the mitochondrion inner membrane. It catalyses the reaction ATP + H2O + 4 H(+)(in) = ADP + phosphate + 5 H(+)(out). Mitochondrial membrane ATP synthase (F(1)F(0) ATP synthase or Complex V) produces ATP from ADP in the presence of a proton gradient across the membrane which is generated by electron transport complexes of the respiratory chain. F-type ATPases consist of two structural domains, F(1) - containing the extramembraneous catalytic core, and F(0) - containing the membrane proton channel, linked together by a central stalk and a peripheral stalk. During catalysis, ATP synthesis in the catalytic domain of F(1) is coupled via a rotary mechanism of the central stalk subunits to proton translocation. Subunits alpha and beta form the catalytic core in F(1). Rotation of the central stalk against the surrounding alpha(3)beta(3) subunits leads to hydrolysis of ATP in three separate catalytic sites on the beta subunits. This is ATP synthase subunit beta, mitochondrial from Hemicentrotus pulcherrimus (Sea urchin).